A 74-amino-acid polypeptide reads, in one-letter code: DNA gyrase inhibitor YacG (74 aa).

4 residues coordinate Zn(2+): cysteine 7, cysteine 10, cysteine 26, and cysteine 30.

This sequence belongs to the DNA gyrase inhibitor YacG family. In terms of assembly, interacts with GyrB. Zn(2+) serves as cofactor.

Functionally, inhibits all the catalytic activities of DNA gyrase by preventing its interaction with DNA. Acts by binding directly to the C-terminal domain of GyrB, which probably disrupts DNA binding by the gyrase. This is DNA gyrase inhibitor YacG from Shewanella denitrificans (strain OS217 / ATCC BAA-1090 / DSM 15013).